Here is a 1615-residue protein sequence, read N- to C-terminus: ABC transporter A family member 4 (1615 aa).

Helical transmembrane passes span 30-50, 233-253, 278-298, 308-328, 337-357, 365-385, and 405-425; these read ILLP…SMII, GVFI…NIVI, SIIS…ILSA, ITLI…AFIL, YAGL…IIIG, LKLL…YVWC, and YEII…LWYL. An ABC transmembrane type-2 domain is found at 182 to 383; it reads TQIQTGVDQA…PIAISVANYV (202 aa). An ABC transporter 1 domain is found at 492–727; it reads ISIRNLRKEF…FGVGYLLTIS (236 aa). 528–535 is a binding site for ATP; sequence GPNGSGKS. A run of 7 helical transmembrane segments spans residues 855–875, 1022–1042, 1075–1095, 1106–1126, 1135–1155, 1174–1194, and 1218–1238; these read IKSF…GLIL, FVAI…IAAS, IWDY…IIAV, YISG…LMSF, VGAI…ISFI, IIEY…ILAI, and LLPN…ILLI. The ABC transporter 2 domain occupies 1293–1528; that stretch reads IIFNNLYKKF…FGSGYSIEVK (236 aa). An ATP-binding site is contributed by 1331-1338; the sequence is GLNGCGKS.

The protein belongs to the ABC transporter superfamily. ABCA family.

It is found in the membrane. This chain is ABC transporter A family member 4 (abcA4), found in Dictyostelium discoideum (Social amoeba).